Consider the following 350-residue polypeptide: Anthranilate phosphoribosyltransferase (350 aa).

5-phospho-alpha-D-ribose 1-diphosphate contacts are provided by residues Gly-82, 85-86 (GD), Ser-90, 92-95 (NVST), 110-118 (KHGNRAVTG), and Gly-122. Gly-82 is an anthranilate binding site. Ser-94 serves as a coordination point for Mg(2+). Asn-113 lines the anthranilate pocket. Residue Arg-168 coordinates anthranilate. Mg(2+)-binding residues include Asp-232 and Glu-233.

The protein belongs to the anthranilate phosphoribosyltransferase family. As to quaternary structure, homodimer. It depends on Mg(2+) as a cofactor.

The enzyme catalyses N-(5-phospho-beta-D-ribosyl)anthranilate + diphosphate = 5-phospho-alpha-D-ribose 1-diphosphate + anthranilate. Its pathway is amino-acid biosynthesis; L-tryptophan biosynthesis; L-tryptophan from chorismate: step 2/5. Functionally, catalyzes the transfer of the phosphoribosyl group of 5-phosphorylribose-1-pyrophosphate (PRPP) to anthranilate to yield N-(5'-phosphoribosyl)-anthranilate (PRA). The polypeptide is Anthranilate phosphoribosyltransferase (Methanothermobacter marburgensis (strain ATCC BAA-927 / DSM 2133 / JCM 14651 / NBRC 100331 / OCM 82 / Marburg) (Methanobacterium thermoautotrophicum)).